A 736-amino-acid polypeptide reads, in one-letter code: Catalase-peroxidase (736 aa).

A cross-link (tryptophyl-tyrosyl-methioninium (Trp-Tyr) (with M-249)) is located at residues 100–223 (WHSAGTYRIG…LAAVQMGLIY (124 aa)). The Proton acceptor role is filled by H101. Positions 223–249 (YVNPEGPDGKPDPVAAARDIRETFRRM) form a cross-link, tryptophyl-tyrosyl-methioninium (Tyr-Met) (with W-100). H264 is a heme b binding site.

The protein belongs to the peroxidase family. Peroxidase/catalase subfamily. As to quaternary structure, homodimer or homotetramer. Heme b is required as a cofactor. Formation of the three residue Trp-Tyr-Met cross-link is important for the catalase, but not the peroxidase activity of the enzyme.

It catalyses the reaction H2O2 + AH2 = A + 2 H2O. The catalysed reaction is 2 H2O2 = O2 + 2 H2O. Bifunctional enzyme with both catalase and broad-spectrum peroxidase activity. This chain is Catalase-peroxidase, found in Geobacillus kaustophilus (strain HTA426).